The chain runs to 374 residues: Chaperone protein DnaJ (374 aa).

The J domain maps to 4–68 (DYYEILGVSR…EMKARFDRFG (65 aa)). The segment at 132–214 (GGDKELTIKH…CGGRGQKEAT (83 aa)) adopts a CR-type zinc-finger fold. Zn(2+) is bound by residues cysteine 145, cysteine 148, cysteine 162, cysteine 165, cysteine 188, cysteine 191, cysteine 202, and cysteine 205. 4 CXXCXGXG motif repeats span residues 145–152 (CGTCNGSG), 162–169 (CSTCGGTG), 188–195 (CPSCNGSG), and 202–209 (CVDCGGRG).

This sequence belongs to the DnaJ family. Homodimer. It depends on Zn(2+) as a cofactor.

Its subcellular location is the cytoplasm. Functionally, participates actively in the response to hyperosmotic and heat shock by preventing the aggregation of stress-denatured proteins and by disaggregating proteins, also in an autonomous, DnaK-independent fashion. Unfolded proteins bind initially to DnaJ; upon interaction with the DnaJ-bound protein, DnaK hydrolyzes its bound ATP, resulting in the formation of a stable complex. GrpE releases ADP from DnaK; ATP binding to DnaK triggers the release of the substrate protein, thus completing the reaction cycle. Several rounds of ATP-dependent interactions between DnaJ, DnaK and GrpE are required for fully efficient folding. Also involved, together with DnaK and GrpE, in the DNA replication of plasmids through activation of initiation proteins. The polypeptide is Chaperone protein DnaJ (Trichodesmium erythraeum (strain IMS101)).